Here is a 314-residue protein sequence, read N- to C-terminus: MFKRTVILLAGPTGSGKTAVSLKLAPLVDGEIISVDSMQVYQGMDIGTAKVSLTDRKEVPHHLIDVCHVQESFNAVDFYYHAVQACQDILSRNKVPILVGGTGFYFHTFLSGPPSGPSPDFVLREQLTLEAQERGISALYQELELLDPVYAATITKHDKNKIIRALEIIRKTGSKVSSYAWQSTVNESKEYHCRRWLLSPDPELLRHNILERCDQMLEEGLLDEVQALLAAGIKGNSSASRAIGYREWIEFLDLGSPPDLFEITKQKFITNTWRYTKKQRTWFKRYSLFRELRPMGMTLDDMAKKIAQDYFLCG.

Position 11–18 (11–18 (GPTGSGKT)) interacts with ATP. 13 to 18 (TGSGKT) contributes to the substrate binding site. The tract at residues 36–39 (DSMQ) is interaction with substrate tRNA.

It belongs to the IPP transferase family. As to quaternary structure, monomer. Mg(2+) serves as cofactor.

The catalysed reaction is adenosine(37) in tRNA + dimethylallyl diphosphate = N(6)-dimethylallyladenosine(37) in tRNA + diphosphate. Its function is as follows. Catalyzes the transfer of a dimethylallyl group onto the adenine at position 37 in tRNAs that read codons beginning with uridine, leading to the formation of N6-(dimethylallyl)adenosine (i(6)A). This chain is tRNA dimethylallyltransferase, found in Chlamydia trachomatis serovar D (strain ATCC VR-885 / DSM 19411 / UW-3/Cx).